Reading from the N-terminus, the 429-residue chain is Histidine--tRNA ligase (429 aa).

Belongs to the class-II aminoacyl-tRNA synthetase family. As to quaternary structure, homodimer.

The protein resides in the cytoplasm. It carries out the reaction tRNA(His) + L-histidine + ATP = L-histidyl-tRNA(His) + AMP + diphosphate + H(+). The polypeptide is Histidine--tRNA ligase (Desulfotalea psychrophila (strain LSv54 / DSM 12343)).